Consider the following 176-residue polypeptide: Cytochrome b (176 aa).

A run of 3 helical transmembrane segments spans residues 33-53 (FGSL…FLAM), 77-98 (WVLR…YLHV), and 113-133 (WNMG…GYVL). Heme b is bound by residues histidine 83 and histidine 97.

This sequence belongs to the cytochrome b family. As to quaternary structure, the cytochrome bc1 complex contains 11 subunits: 3 respiratory subunits (MT-CYB, CYC1 and UQCRFS1), 2 core proteins (UQCRC1 and UQCRC2) and 6 low-molecular weight proteins (UQCRH/QCR6, UQCRB/QCR7, UQCRQ/QCR8, UQCR10/QCR9, UQCR11/QCR10 and a cleavage product of UQCRFS1). This cytochrome bc1 complex then forms a dimer. The cofactor is heme b.

The protein resides in the mitochondrion inner membrane. Functionally, component of the ubiquinol-cytochrome c reductase complex (complex III or cytochrome b-c1 complex) that is part of the mitochondrial respiratory chain. The b-c1 complex mediates electron transfer from ubiquinol to cytochrome c. Contributes to the generation of a proton gradient across the mitochondrial membrane that is then used for ATP synthesis. This is Cytochrome b (MT-CYB) from Nycticeius humeralis (Evening bat).